Here is a 135-residue protein sequence, read N- to C-terminus: ATP synthase epsilon chain 1 (135 aa).

It belongs to the ATPase epsilon chain family. F-type ATPases have 2 components, CF(1) - the catalytic core - and CF(0) - the membrane proton channel. CF(1) has five subunits: alpha(3), beta(3), gamma(1), delta(1), epsilon(1). CF(0) has three main subunits: a, b and c.

It localises to the cell inner membrane. In terms of biological role, produces ATP from ADP in the presence of a proton gradient across the membrane. In Nitrobacter hamburgensis (strain DSM 10229 / NCIMB 13809 / X14), this protein is ATP synthase epsilon chain 1.